The chain runs to 305 residues: Acetylglutamate kinase (305 aa).

Residues 67–68 (GG), R89, and N190 contribute to the substrate site.

Belongs to the acetylglutamate kinase family. ArgB subfamily.

Its subcellular location is the cytoplasm. It carries out the reaction N-acetyl-L-glutamate + ATP = N-acetyl-L-glutamyl 5-phosphate + ADP. It functions in the pathway amino-acid biosynthesis; L-arginine biosynthesis; N(2)-acetyl-L-ornithine from L-glutamate: step 2/4. Its function is as follows. Catalyzes the ATP-dependent phosphorylation of N-acetyl-L-glutamate. This Bifidobacterium longum subsp. infantis (strain ATCC 15697 / DSM 20088 / JCM 1222 / NCTC 11817 / S12) protein is Acetylglutamate kinase.